A 435-amino-acid polypeptide reads, in one-letter code: Arginine biosynthesis bifunctional protein ArgJ, mitochondrial (435 aa).

Substrate-binding residues include T167, K193, T204, E291, N430, and T435. The Nucleophile role is filled by T204.

It belongs to the ArgJ family. In terms of assembly, heterodimer of an alpha and a beta chain. The alpha and beta chains are autoproteolytically processed from a single precursor protein within the mitochondrion.

Its subcellular location is the mitochondrion matrix. The enzyme catalyses N(2)-acetyl-L-ornithine + L-glutamate = N-acetyl-L-glutamate + L-ornithine. It catalyses the reaction L-glutamate + acetyl-CoA = N-acetyl-L-glutamate + CoA + H(+). Its pathway is amino-acid biosynthesis; L-arginine biosynthesis; L-ornithine and N-acetyl-L-glutamate from L-glutamate and N(2)-acetyl-L-ornithine (cyclic): step 1/1. The protein operates within amino-acid biosynthesis; L-arginine biosynthesis; N(2)-acetyl-L-ornithine from L-glutamate: step 1/4. Its function is as follows. Catalyzes two activities which are involved in the cyclic version of arginine biosynthesis: the synthesis of acetylglutamate from glutamate and acetyl-CoA, and of ornithine by transacetylation between acetylornithine and glutamate. The chain is Arginine biosynthesis bifunctional protein ArgJ, mitochondrial from Heterostelium pallidum (strain ATCC 26659 / Pp 5 / PN500) (Cellular slime mold).